A 370-amino-acid chain; its full sequence is uncharacterized protein (370 aa).

M1 carries the N-acetylmethionine modification.

It belongs to the ornithine cyclodeaminase/mu-crystallin family.

This is an uncharacterized protein from Saccharomyces cerevisiae (strain ATCC 204508 / S288c) (Baker's yeast).